Reading from the N-terminus, the 295-residue chain is Putative xyloglucan endotransglucosylase/hydrolase protein 1 (295 aa).

Residues 1 to 24 (MNKMEYLSIFGFVSVLYLIIRVDA) form the signal peptide. The GH16 domain maps to 27–225 (YEVNGIDQSK…WSLAPFKANF (199 aa)). The active-site Nucleophile is Glu-113. The active-site Proton donor is the Glu-117. Xyloglucan contacts are provided by residues Glu-117, 129–131 (QTN), and 139–141 (NRE). N-linked (GlcNAc...) asparagine glycosylation occurs at Asn-180. Xyloglucan is bound by residues 204–205 (NW) and Gly-209. N-linked (GlcNAc...) asparagine glycans are attached at residues Asn-215 and Asn-229. Cystine bridges form between Cys-233/Cys-242 and Cys-278/Cys-291. Arg-283 contacts xyloglucan.

The protein belongs to the glycosyl hydrolase 16 family. XTH group 1 subfamily. Contains at least one intrachain disulfide bond essential for its enzymatic activity.

The protein resides in the secreted. It is found in the cell wall. It localises to the extracellular space. The protein localises to the apoplast. The catalysed reaction is breaks a beta-(1-&gt;4) bond in the backbone of a xyloglucan and transfers the xyloglucanyl segment on to O-4 of the non-reducing terminal glucose residue of an acceptor, which can be a xyloglucan or an oligosaccharide of xyloglucan.. Its function is as follows. May catalyze xyloglucan endohydrolysis (XEH) and/or endotransglycosylation (XET). Cleaves and religates xyloglucan polymers, an essential constituent of the primary cell wall, and thereby participates in cell wall construction of growing tissues. This chain is Putative xyloglucan endotransglucosylase/hydrolase protein 1 (XTH1), found in Arabidopsis thaliana (Mouse-ear cress).